We begin with the raw amino-acid sequence, 346 residues long: Phosphate acyltransferase (346 aa).

This sequence belongs to the PlsX family. Homodimer. Probably interacts with PlsY.

It localises to the cytoplasm. The enzyme catalyses a fatty acyl-[ACP] + phosphate = an acyl phosphate + holo-[ACP]. The protein operates within lipid metabolism; phospholipid metabolism. Functionally, catalyzes the reversible formation of acyl-phosphate (acyl-PO(4)) from acyl-[acyl-carrier-protein] (acyl-ACP). This enzyme utilizes acyl-ACP as fatty acyl donor, but not acyl-CoA. In Geotalea daltonii (strain DSM 22248 / JCM 15807 / FRC-32) (Geobacter daltonii), this protein is Phosphate acyltransferase.